The primary structure comprises 439 residues: ATP-dependent RNA helicase RhlB (439 aa).

Positions 9 to 37 (QKFADLPLHPEVKQALAENGFEFCTPIQA) match the Q motif motif. The region spanning 40–219 (LPVLLQSKDI…YDHMNDPVKV (180 aa)) is the Helicase ATP-binding domain. 53–60 (AQTGTGKT) contacts ATP. Positions 165–168 (DEAD) match the DEAD box motif. A Helicase C-terminal domain is found at 243 to 390 (KMRLLLTLIE…VSNYDRDALL (148 aa)). A disordered region spans residues 395–439 (SPVKIHRKHPAGARNLRERSGAGRTPGAHRSGGRPPRHDRTRRQP). A compositionally biased stretch (basic residues) spans 425-439 (SGGRPPRHDRTRRQP).

The protein belongs to the DEAD box helicase family. RhlB subfamily. Component of the RNA degradosome, which is a multiprotein complex involved in RNA processing and mRNA degradation.

Its subcellular location is the cytoplasm. It carries out the reaction ATP + H2O = ADP + phosphate + H(+). Functionally, DEAD-box RNA helicase involved in RNA degradation. Has RNA-dependent ATPase activity and unwinds double-stranded RNA. The chain is ATP-dependent RNA helicase RhlB from Shewanella oneidensis (strain ATCC 700550 / JCM 31522 / CIP 106686 / LMG 19005 / NCIMB 14063 / MR-1).